A 609-amino-acid polypeptide reads, in one-letter code: Polyadenylate-binding protein 7 (609 aa).

RRM domains are found at residues 24–102 (ASLY…WSVR), 112–189 (GNVF…KFMK), 201–278 (TNLY…RAQK), and 304–381 (SNIY…IAQK). In terms of domain architecture, PABC spans 509–586 (EMKKSIQQRQ…AFEVLKSSKT (78 aa)).

It belongs to the polyadenylate-binding protein type-1 family. As to expression, expressed predominantly in siliques.

It is found in the cytoplasm. Its subcellular location is the nucleus. Binds the poly(A) tail of mRNA. Appears to be an important mediator of the multiple roles of the poly(A) tail in mRNA biogenesis, stability and translation. The chain is Polyadenylate-binding protein 7 (PAB7) from Arabidopsis thaliana (Mouse-ear cress).